We begin with the raw amino-acid sequence, 278 residues long: Msm operon regulatory protein (278 aa).

The 99-residue stretch at 176 to 274 (NQVKKIIHSQ…GKSPSKFRKE (99 aa)) folds into the HTH araC/xylS-type domain. 2 consecutive DNA-binding regions (H-T-H motif) follow at residues 193–214 (NDIA…RKST) and 241–264 (IAEI…KNYF).

In terms of biological role, regulatory protein for the msm operon for multiple sugar metabolism. Activates the transcription of the msmEFGK, aga, dexB and gftA genes. This Streptococcus mutans serotype c (strain ATCC 700610 / UA159) protein is Msm operon regulatory protein (msmR).